Reading from the N-terminus, the 882-residue chain is DNA mismatch repair protein MutS (882 aa).

Position 627-634 (627-634 (GPNMAGKS)) interacts with ATP.

It belongs to the DNA mismatch repair MutS family.

Its function is as follows. This protein is involved in the repair of mismatches in DNA. It is possible that it carries out the mismatch recognition step. This protein has a weak ATPase activity. This Anaeromyxobacter sp. (strain K) protein is DNA mismatch repair protein MutS.